The chain runs to 33 residues: Cytochrome b6-f complex subunit 6 (33 aa).

The helical transmembrane segment at 4 to 24 (ITIISYFGLLLASIIFTLVLF) threads the bilayer.

The protein belongs to the PetL family. In terms of assembly, the 4 large subunits of the cytochrome b6-f complex are cytochrome b6, subunit IV (17 kDa polypeptide, PetD), cytochrome f and the Rieske protein, while the 4 small subunits are PetG, PetL, PetM and PetN. The complex functions as a dimer.

The protein localises to the plastid. It is found in the chloroplast thylakoid membrane. In terms of biological role, component of the cytochrome b6-f complex, which mediates electron transfer between photosystem II (PSII) and photosystem I (PSI), cyclic electron flow around PSI, and state transitions. PetL is important for photoautotrophic growth as well as for electron transfer efficiency and stability of the cytochrome b6-f complex. The sequence is that of Cytochrome b6-f complex subunit 6 from Pinus mugo (Dwarf mountain pine).